The sequence spans 433 residues: E3 ubiquitin-protein ligase RGLG5 (433 aa).

The interval 1–61 (MGGSSSKESP…SYNSGRQTPK (61 aa)) is disordered. Glycine 2 carries N-myristoyl glycine lipidation. A compositionally biased stretch (low complexity) spans 22–39 (SVSGSSSYSSAWDQSSYY). Residues 40–61 (QTPNHPSASPVSSYNSGRQTPK) are compositionally biased toward polar residues. Positions 93–313 (NLIVGIDVTK…KEAEFALSAL (221 aa)) constitute a VWFA domain. Positions 340–383 (IALPPPTYATQSMRNSPRTSRSTSFQNKPYDNGVSSTPPSTTHN) are disordered. Residues 347–383 (YATQSMRNSPRTSRSTSFQNKPYDNGVSSTPPSTTHN) are compositionally biased toward polar residues. The RING-type zinc finger occupies 390-423 (CPVCLVSAKNMAFNCGHQTCAGCGEDLHVCPICR).

As to quaternary structure, interacts with PP2CA. N-myristoylated.

Its subcellular location is the cell membrane. The enzyme catalyses S-ubiquitinyl-[E2 ubiquitin-conjugating enzyme]-L-cysteine + [acceptor protein]-L-lysine = [E2 ubiquitin-conjugating enzyme]-L-cysteine + N(6)-ubiquitinyl-[acceptor protein]-L-lysine.. Together with RGLG1, mediates the ubiquitination and subsequent proteasomal degradation of the target protein PP2CA. Functions as a positive regulator of abscisic acid (ABA) signaling through ABA-dependent degradation of PP2CA, a major inhibitor of ABA signaling. This chain is E3 ubiquitin-protein ligase RGLG5, found in Arabidopsis thaliana (Mouse-ear cress).